The primary structure comprises 498 residues: Glycerol kinase (498 aa).

Thr12 contributes to the ADP binding site. The ATP site is built by Thr12, Thr13, and Ser14. Thr12 is a binding site for sn-glycerol 3-phosphate. Arg16 is an ADP binding site. Positions 82, 83, 134, and 243 each coordinate sn-glycerol 3-phosphate. Glycerol is bound by residues Arg82, Glu83, Tyr134, Asp243, and Gln244. Residues Thr265 and Gly308 each coordinate ADP. Residues Thr265, Gly308, Gln312, and Gly412 each contribute to the ATP site. Gly412 is a binding site for ADP.

This sequence belongs to the FGGY kinase family.

It catalyses the reaction glycerol + ATP = sn-glycerol 3-phosphate + ADP + H(+). It participates in polyol metabolism; glycerol degradation via glycerol kinase pathway; sn-glycerol 3-phosphate from glycerol: step 1/1. Its activity is regulated as follows. Inhibited by fructose 1,6-bisphosphate (FBP). Functionally, key enzyme in the regulation of glycerol uptake and metabolism. Catalyzes the phosphorylation of glycerol to yield sn-glycerol 3-phosphate. The chain is Glycerol kinase from Rhizobium rhizogenes (strain K84 / ATCC BAA-868) (Agrobacterium radiobacter).